Reading from the N-terminus, the 635-residue chain is Sodium- and chloride-dependent transporter XTRP3B (635 aa).

The interval 1–38 is disordered; the sequence is MESPSAHAVSLPEDEELQPWGGAGGPGQHPGRPRSTEC. Topologically, residues 1 to 56 are cytoplasmic; sequence MESPSAHAVSLPEDEELQPWGGAGGPGQHPGRPRSTECAHPGVVEKVRPKWDNPLQ. A helical transmembrane segment spans residues 57 to 77; the sequence is FLLVCISYAVGLGNVWRFPYL. The Extracellular portion of the chain corresponds to 78–85; the sequence is CQMYGGGN. Residues 86–106 traverse the membrane as a helical segment; it reads FLVPYIIMLIVEGMPLLYLEL. Topologically, residues 107–127 are cytoplasmic; sequence AVGQRMRQGSIGAWRTISPYL. Residues 128-148 form a helical membrane-spanning segment; that stretch reads SGVGIASLVVSFLASVYFNVI. The Extracellular segment spans residues 149–208; the sequence is NTWALWYLFHSFQDPLPWSVCPLNSNHTGYDEECEKASSTQYFWYRKTLNISPSIQENGG. Asn174 is a glycosylation site (N-linked (GlcNAc...) asparagine). Residues 209–229 form a helical membrane-spanning segment; sequence VQWEPALCLTLAWLMVYLCIL. Over 230-237 the chain is Cytoplasmic; that stretch reads RGTESTGK. A helical transmembrane segment spans residues 238–258; sequence VVYFTTSLPYFVLIIYLVRGL. Topologically, residues 259-284 are extracellular; sequence TLHGATNGLAYMFTPKIEQLANPKAW. Residues 285–305 form a helical membrane-spanning segment; that stretch reads INAATQIFFSLGLGCGGLIAF. Residues 306–319 are Cytoplasmic-facing; it reads ASYNEPSNDCQKHA. A helical membrane pass occupies residues 320–340; that stretch reads LIVSVINSTTAIFSSIVTFSI. At 341-432 the chain is on the extracellular side; it reads YGFKATFNYE…EAIKNMEVSQ (92 aa). N-linked (GlcNAc...) asparagine glycosylation is present at Asn400. Residues 433–453 traverse the membrane as a helical segment; the sequence is LWSVLYFFMLLTLGMGSMVGT. The Cytoplasmic portion of the chain corresponds to 454 to 474; the sequence is GTAILTPLTDSKIISSYLPKE. Residues 475–495 form a helical membrane-spanning segment; the sequence is AISGLVCLLNCAIGMVFTMEA. At 496 to 508 the chain is on the extracellular side; the sequence is GNYWFDLFNDYTA. Residues 509–529 form a helical membrane-spanning segment; sequence TLSLLLIVLVETIAVCYVYGL. Over 530-547 the chain is Cytoplasmic; that stretch reads KRFESDLRAMTGRTLSWY. The helical transmembrane segment at 548-568 threads the bilayer; that stretch reads WKVMWAFVSPLLIVGLFIFYL. Residues 569 to 597 lie on the Extracellular side of the membrane; sequence SDYILTGTLQYQAWDATQGHVVTKDYPTY. A helical membrane pass occupies residues 598 to 618; sequence ALAVIGLLVASSTMCIPLVAL. Topologically, residues 619–635 are cytoplasmic; that stretch reads GTFVTRHFKIREQFSAA.

Belongs to the sodium:neurotransmitter symporter (SNF) (TC 2.A.22) family. SLC6A20 subfamily. In terms of assembly, interacts with CLTRN. Detected only in kidney and lung.

Its subcellular location is the apical cell membrane. Does not show transporter activity with a range of tested amino acids including proline, glutamine, glutamic acid, leucine, alanine, histidine, glycine and arginine. The sequence is that of Sodium- and chloride-dependent transporter XTRP3B (Slc6a20b) from Mus musculus (Mouse).